The primary structure comprises 80 residues: U-scoloptoxin(15)-Er1a (80 aa).

Residues 1–22 (MQNKGVVLTLFLVVSMAIVISS) form the signal peptide.

The protein belongs to the scoloptoxin-15 family. Contains 2 disulfide bonds. In terms of tissue distribution, expressed by the venom gland.

The protein resides in the secreted. The polypeptide is U-scoloptoxin(15)-Er1a (Ethmostigmus rubripes (Giant centipede)).